Consider the following 398-residue polypeptide: Cobalamin import ATP-binding protein BtuD (398 aa).

The ABC transporter domain occupies 3–237; the sequence is LDVTGLDVEL…DTIRAAFDAR (235 aa). 35–42 serves as a coordination point for ATP; that stretch reads GPNGAGKS.

It belongs to the ABC transporter superfamily. As to quaternary structure, the complex is composed of two ATP-binding proteins (BtuD), two transmembrane proteins (BtuC) and a solute-binding protein (BtuF).

It localises to the cell membrane. The catalysed reaction is an R-cob(III)alamin(out) + ATP + H2O = an R-cob(III)alamin(in) + ADP + phosphate + H(+). Its function is as follows. Required for corrinoid utilization. Probably part of the ABC transporter complex BtuCDF involved in cobalamin (vitamin B12) import. Probably responsible for energy coupling to the transport system. The polypeptide is Cobalamin import ATP-binding protein BtuD (btuD) (Halobacterium salinarum (strain ATCC 29341 / DSM 671 / R1)).